The primary structure comprises 234 residues: Phosphoribosylaminoimidazole-succinocarboxamide synthase (234 aa).

This sequence belongs to the SAICAR synthetase family.

It carries out the reaction 5-amino-1-(5-phospho-D-ribosyl)imidazole-4-carboxylate + L-aspartate + ATP = (2S)-2-[5-amino-1-(5-phospho-beta-D-ribosyl)imidazole-4-carboxamido]succinate + ADP + phosphate + 2 H(+). It functions in the pathway purine metabolism; IMP biosynthesis via de novo pathway; 5-amino-1-(5-phospho-D-ribosyl)imidazole-4-carboxamide from 5-amino-1-(5-phospho-D-ribosyl)imidazole-4-carboxylate: step 1/2. This Exiguobacterium sp. (strain ATCC BAA-1283 / AT1b) protein is Phosphoribosylaminoimidazole-succinocarboxamide synthase.